The primary structure comprises 425 residues: E3 ubiquitin-protein ligase CBLL2 (425 aa).

The segment at 57-97 adopts an RING-type zinc-finger fold; the sequence is CDKCDLPIKIYGRIIPCKHAFCYHCANLYDKVGYKVCPRCR. Residues 96 to 154 form an HYB domain region; that stretch reads CRYPVLRIEAHKRGSVFMCSIVQQCKRTYLSQKSLQAHIKRRHKRARKQVTSASLEKVR. The C2H2-type zinc finger occupies 112–138; the sequence is FMCSIVQQCKRTYLSQKSLQAHIKRRH. Disordered stretches follow at residues 241-297 and 382-425; these read DHIQ…HQMP and TDAM…HRRY. Positions 398–408 are enriched in pro residues; sequence PCPPTRSPPPS. A compositionally biased stretch (basic residues) spans 412 to 425; that stretch reads GRSHHSHQRRHRRY.

In terms of assembly, homodimer. As to expression, exclusively expressed in testis and sperm, including spermatocytes, round and elongated spermatids, and Leydig cells.

It is found in the cytoplasm. The enzyme catalyses S-ubiquitinyl-[E2 ubiquitin-conjugating enzyme]-L-cysteine + [acceptor protein]-L-lysine = [E2 ubiquitin-conjugating enzyme]-L-cysteine + N(6)-ubiquitinyl-[acceptor protein]-L-lysine.. Its pathway is protein modification; protein ubiquitination. E3 ubiquitin ligase catalyzing the covalent attachment of ubiquitin moieties onto substrate proteins. May operate on tyrosine-phosphorylated SRC substrates. The polypeptide is E3 ubiquitin-protein ligase CBLL2 (Homo sapiens (Human)).